A 782-amino-acid polypeptide reads, in one-letter code: General transcription and DNA repair factor IIH helicase/translocase subunit XPB (782 aa).

The segment covering 1–11 (MGKRDRADRDK) has biased composition (basic and acidic residues). Disordered stretches follow at residues 1 to 51 (MGKR…ESGT) and 218 to 241 (SAISKTAESSGGPSTSRVTDPQGK). Positions 6–18 (RADRDKKKSRKRH) match the Nuclear localization signal motif. A compositionally biased stretch (acidic residues) spans 21–30 (DEEDDEEDAP). Polar residues predominate over residues 218–236 (SAISKTAESSGGPSTSRVT). The Helicase ATP-binding domain maps to 327-488 (MFGNGRARSG…DLNFLIGPKL (162 aa)). 340-347 (LPCGAGKS) serves as a coordination point for ATP. The short motif at 441–444 (DEVH) is the DEVH box element. Residues 542–702 (RACQFLIKFH…LAGMEEEDLA (161 aa)) form the Helicase C-terminal domain. Phosphoserine is present on S686. S751 carries the post-translational modification Phosphoserine; by CK2.

This sequence belongs to the helicase family. RAD25/XPB subfamily. Component of the 7-subunit TFIIH core complex composed of XPB/ERCC3, XPD/ERCC2, GTF2H1, GTF2H2, GTF2H3, GTF2H4 and GTF2H5, which is active in NER. The core complex associates with the 3-subunit CDK-activating kinase (CAK) module composed of CCNH/cyclin H, CDK7 and MNAT1 to form the 10-subunit holoenzyme (holo-TFIIH) active in transcription. Interacts with PUF60. Interacts with ATF7IP. Interacts with KAT2A; leading to KAT2A recruitment to promoters and acetylation of histones. Part of TBP-based Pol II pre-initiation complex (PIC), in which Pol II core assembles with general transcription factors and other specific initiation factors including GTF2E1, GTF2E2, GTF2F1, GTF2F2, TCEA1, ERCC2, ERCC3, GTF2H2, GTF2H3, GTF2H4, GTF2H5, GTF2A1, GTF2A2, GTF2B and TBP; this large multi-subunit PIC complex mediates DNA unwinding and targets Pol II core to the transcription start site where the first phosphodiester bond forms. Phosphorylation on Ser-751 by CK2 controls the 5'-excision activity of ERCC1-XPF endonuclease; phosphorylated protein inhibits the excision activity and thus NER. Dephosphorylation reactivates the 5'-excision step. Phosphorylation has no effect on transcription or the 3'-5' helicase activity.

The protein localises to the nucleus. It carries out the reaction Couples ATP hydrolysis with the unwinding of duplex DNA by translocating in the 3'-5' direction.. The enzyme catalyses ATP + H2O = ADP + phosphate + H(+). With respect to regulation, phosphorylation on Ser-751 by CK2 controls the 5'-excision activity of ERCC1-XPF endonuclease; phosphorylated protein inhibits the excision activity and thus NER. ATPase activity is stimulated by TFIIH subunit p52 (GTF2H4). DNA translocase activity by this subunit in TFIIH is stimulated by XPA, ERCC5/XPG and XFP plus ERCC1. Functionally, ATP-dependent 3'-5' DNA helicase/translocase; binds dsDNA rather than ssDNA, unzipping it in a translocase rather than classical helicase activity. Component of the general transcription and DNA repair factor IIH (TFIIH) core complex. When complexed to CDK-activating kinase (CAK), involved in RNA transcription by RNA polymerase II. The ATPase activity of XPB/ERCC3, but not its helicase activity, is required for DNA opening; it may wrap around the damaged DNA wedging it open, causing localized melting and twisting that allows XPD/ERCC2 helicase to anchor. The ATP-dependent helicase activity of XPB/ERCC3 may be required for promoter escape. Also involved in transcription-coupled nucleotide excision repair (NER) of damaged DNA. In NER, TFIIH acts by opening DNA around the lesion to allow the excision of the damaged oligonucleotide and its replacement by a new DNA fragment. The structure of the TFIIH transcription complex differs from the NER-TFIIH complex; large movements by XPD/ERCC2 and XPB/ERCC3 are stabilized by XPA. The sequence is that of General transcription and DNA repair factor IIH helicase/translocase subunit XPB (ERCC3) from Pongo abelii (Sumatran orangutan).